The following is a 404-amino-acid chain: NADH-quinone oxidoreductase subunit D (404 aa).

The protein belongs to the complex I 49 kDa subunit family. In terms of assembly, NDH-1 is composed of 14 different subunits. Subunits NuoB, C, D, E, F, and G constitute the peripheral sector of the complex.

It localises to the cell inner membrane. It carries out the reaction a quinone + NADH + 5 H(+)(in) = a quinol + NAD(+) + 4 H(+)(out). In terms of biological role, NDH-1 shuttles electrons from NADH, via FMN and iron-sulfur (Fe-S) centers, to quinones in the respiratory chain. The immediate electron acceptor for the enzyme in this species is believed to be ubiquinone. Couples the redox reaction to proton translocation (for every two electrons transferred, four hydrogen ions are translocated across the cytoplasmic membrane), and thus conserves the redox energy in a proton gradient. This Leptospira borgpetersenii serovar Hardjo-bovis (strain JB197) protein is NADH-quinone oxidoreductase subunit D.